Consider the following 100-residue polypeptide: Ubiquitin-related modifier 1 homolog (100 aa).

1-thioglycine is present on Gly100. Residue Gly100 forms a Glycyl lysine isopeptide (Gly-Lys) (interchain with K-? in acceptor proteins) linkage.

Belongs to the URM1 family. Post-translationally, C-terminal thiocarboxylation occurs in 2 steps, it is first acyl-adenylated (-COAMP) via the hesA/moeB/thiF part of the MOCS3 homolog, then thiocarboxylated (-COSH) via the rhodanese domain of the MOCS3 homolog.

It is found in the cytoplasm. Its pathway is tRNA modification; 5-methoxycarbonylmethyl-2-thiouridine-tRNA biosynthesis. In terms of biological role, acts as a sulfur carrier required for 2-thiolation of mcm(5)S(2)U at tRNA wobble positions of cytosolic tRNA(Lys), tRNA(Glu) and tRNA(Gln). Serves as sulfur donor in tRNA 2-thiolation reaction by being thiocarboxylated (-COSH) at its C-terminus by MOCS3. The sulfur is then transferred to tRNA to form 2-thiolation of mcm(5)S(2)U. Also acts as a ubiquitin-like protein (UBL) that is covalently conjugated via an isopeptide bond to lysine residues of target proteins. The thiocarboxylated form serves as substrate for conjugation and oxidative stress specifically induces the formation of UBL-protein conjugates. This chain is Ubiquitin-related modifier 1 homolog, found in Oryza sativa subsp. japonica (Rice).